The sequence spans 927 residues: Autophagy-related protein 18h (927 aa).

Disordered stretches follow at residues 1 to 25 (MKSN…NGTN) and 333 to 353 (DGPG…VGSH). Residues 335 to 344 (PGPSLSSSPG) are compositionally biased toward low complexity. 2 WD repeats span residues 379-419 (AHTS…TKNG) and 441-482 (MTSA…NVLE). Disordered regions lie at residues 750–788 (NRGF…EERR) and 844–927 (IENS…SEEG). A compositionally biased stretch (low complexity) spans 846-859 (NSSGISGDSNVSSN). Basic and acidic residues predominate over residues 896–907 (ETEHKDAPSDGK).

This sequence belongs to the WD repeat PROPPIN family. Component of the PI(3,5)P2 regulatory complex at least composed of ATG18, SAC/FIG4, FAB1 and VAC14. Expressed in roots, flowers and leaves.

The protein localises to the preautophagosomal structure membrane. It localises to the vacuole membrane. The PI(3,5)P2 regulatory complex regulates both the synthesis and turnover of phosphatidylinositol 3,5-bisphosphate (PtdIns(3,5)P2). Required for autophagy. The sequence is that of Autophagy-related protein 18h (ATG18H) from Arabidopsis thaliana (Mouse-ear cress).